Reading from the N-terminus, the 152-residue chain is Lipoprotein signal peptidase (152 aa).

The next 3 helical transmembrane spans lie at 5-25, 61-81, and 84-104; these read LFVLSLILLVALDQLSKFWIV, WFFVVITVLVIGYAIYYLATH, and LNIWKQLALLLIISGGIGNFI. Residues aspartate 114 and aspartate 130 contribute to the active site. The chain crosses the membrane as a helical span at residues 125 to 145; it reads IFNVADSYLTVGVILLVICLW.

This sequence belongs to the peptidase A8 family.

It is found in the cell membrane. The catalysed reaction is Release of signal peptides from bacterial membrane prolipoproteins. Hydrolyzes -Xaa-Yaa-Zaa-|-(S,diacylglyceryl)Cys-, in which Xaa is hydrophobic (preferably Leu), and Yaa (Ala or Ser) and Zaa (Gly or Ala) have small, neutral side chains.. It participates in protein modification; lipoprotein biosynthesis (signal peptide cleavage). Functionally, this protein specifically catalyzes the removal of signal peptides from prolipoproteins. The protein is Lipoprotein signal peptidase of Streptococcus pyogenes serotype M18 (strain MGAS8232).